The primary structure comprises 360 residues: Insulin gene enhancer protein ISL-2 (360 aa).

LIM zinc-binding domains follow at residues 25–86 and 87–149; these read AMCV…RLFG and IKCA…LLER. The interval 151 to 177 is disordered; the sequence is AAGSPRSPGPLPGTPPGLHLPDAGSGQ. S154 and S157 each carry phosphoserine. The segment at residues 192–251 is a DNA-binding region (homeobox); it reads TTRVRTVLNEKQLHTLRTCYAANPRPDALMKEQLVEMTGLSPRVIRVWFQNKRCKDKKKS. An LIM-binding domain (LID) region spans residues 273-302; it reads GTLLVAGSPSAHENAVQGSAVEVQTYQPPW. S280 is subject to Phosphoserine. Residues 328 to 337 show a composition bias toward low complexity; that stretch reads SGSLGNSSGS. Positions 328–360 are disordered; the sequence is SGSLGNSSGSDVTSLSSQLPDTPNSMVPSPVET. Polar residues predominate over residues 338–360; it reads DVTSLSSQLPDTPNSMVPSPVET.

In terms of assembly, interacts with LHX4.

It localises to the nucleus. Its function is as follows. Transcriptional factor that defines subclasses of motoneurons that segregate into columns in the spinal cord and select distinct axon pathways. In Rattus norvegicus (Rat), this protein is Insulin gene enhancer protein ISL-2 (Isl2).